The primary structure comprises 63 residues: Overexpressed in colon carcinoma 1 protein homolog (63 aa).

Over residues 1-12 (MGCGNSTAASAG) the composition is skewed to low complexity. Positions 1–40 (MGCGNSTAASAGAGQGPAGAAKDVTEESITEDDKRRNYGG) are disordered.

This sequence belongs to the OCC1 family.

In Bos taurus (Bovine), this protein is Overexpressed in colon carcinoma 1 protein homolog.